Consider the following 179-residue polypeptide: MAFLASGPYLTHQQKVLRLYKRALRHLESWCVQRDKYRYFACLMRARFEEHKNEKDMAKATQLLKEAEEEFWYRQHPQPYIFPDSPGGTSYERYDCYKVPEWCLDDWHPSEKAMYPDYFAKREKWKKLRRESWEREVKQLQEETPPGGPLTEALPPARKEGDLPPLWWYIVTRPRERPM.

A2 carries the post-translational modification N-acetylalanine. S85 bears the Phosphoserine mark. Residues 136 to 162 (EVKQLQEETPPGGPLTEALPPARKEGD) form a disordered region.

The protein belongs to the complex I LYR family. In terms of assembly, mammalian complex I is composed of 45 different subunits.

The protein resides in the mitochondrion inner membrane. Accessory subunit of the mitochondrial membrane respiratory chain NADH dehydrogenase (Complex I), that is believed to be not involved in catalysis. Complex I functions in the transfer of electrons from NADH to the respiratory chain. The immediate electron acceptor for the enzyme is believed to be ubiquinone. In Pan troglodytes (Chimpanzee), this protein is NADH dehydrogenase [ubiquinone] 1 beta subcomplex subunit 9 (NDUFB9).